Here is a 271-residue protein sequence, read N- to C-terminus: Ribosomal RNA small subunit methyltransferase A (271 aa).

Positions 22, 24, 49, 70, 96, and 116 each coordinate S-adenosyl-L-methionine.

This sequence belongs to the class I-like SAM-binding methyltransferase superfamily. rRNA adenine N(6)-methyltransferase family. RsmA subfamily.

The protein localises to the cytoplasm. The enzyme catalyses adenosine(1518)/adenosine(1519) in 16S rRNA + 4 S-adenosyl-L-methionine = N(6)-dimethyladenosine(1518)/N(6)-dimethyladenosine(1519) in 16S rRNA + 4 S-adenosyl-L-homocysteine + 4 H(+). Its function is as follows. Specifically dimethylates two adjacent adenosines (A1518 and A1519) in the loop of a conserved hairpin near the 3'-end of 16S rRNA in the 30S particle. May play a critical role in biogenesis of 30S subunits. This Sphingopyxis alaskensis (strain DSM 13593 / LMG 18877 / RB2256) (Sphingomonas alaskensis) protein is Ribosomal RNA small subunit methyltransferase A.